The following is a 452-amino-acid chain: Nebulette (452 aa).

A disordered region spans residues 1–26; the sequence is MKVPVSGDVKEETEEENVEQEENQEA. Positions 11–23 are enriched in acidic residues; the sequence is EETEEENVEQEEN. Nebulin repeat units lie at residues 29 to 63, 64 to 98, 101 to 135, 138 to 172, 173 to 199, 206 to 240, 263 to 278, 279 to 313, 315 to 349, 352 to 386, 389 to 423, and 426 to 452; these read SLKP…KSKD, KCTF…ADLS, LYKD…AEKG, DYTH…GTHT, YTAE…EYKK, KEPS…NEMK, LASD…ENKG, LYHF…KNKG, SMLE…KEIK, SSLD…NEIK, GMEL…TEIK, and GMQV…VRMV.

In terms of assembly, interacts (via nebulin repeats 1-5) with DESM (via rod region). Interacts (via SH3 domain) with XIRP2.

Its subcellular location is the cytoplasm. Binds to actin and plays an important role in the assembly of the Z-disk. May functionally link sarcomeric actin to the desmin intermediate filaments in the heart muscle sarcomeres. Isoform 2 might play a role in the assembly of focal adhesion. This chain is Nebulette (Nebl), found in Mus musculus (Mouse).